Here is a 944-residue protein sequence, read N- to C-terminus: MAAVAAVAARRRRSWASLVLAFLGVCLGITLAVDRSNFKTCEESSFCKRQRSIRPGLSPYRALLDSLQLGPDSLTVHLIHEVTKVLLVLELQGLQKNMTRFRIDELEPRRPRYRVPDVLVADPPIARLSVSGRDENSVELTMAEGPYKIILTARPFRLDLLEDRSLLLSVNARGLLEFEHQRAPRVSQGSKDPAEGDGAQPEETPRDGDKPEETQGKAEKDEPGAWEETFKTHSDSKPYGPMSVGLDFSLPGMEHVYGIPEHADNLRLKVTEGGEPYRLYNLDVFQYELYNPMALYGSVPVLLAHNPHRDLGIFWLNAAETWVDISSNTAGKTLFGKMMDYLQGSGETPQTDVRWMSETGIIDVFLLLGPSISDVFRQYASLTGTQALPPLFSLGYHQSRWNYRDEADVLEVDQGFDDHNLPCDVIWLDIEHADGKRYFTWDPSRFPQPRTMLERLASKRRKLVAIVDPHIKVDSGYRVHEELRNLGLYVKTRDGSDYEGWCWPGSAGYPDFTNPTMRAWWANMFSYDNYEGSAPNLFVWNDMNEPSVFNGPEVTMLKDAQHYGGWEHRDVHNIYGLYVHMATADGLRQRSGGMERPFVLARAFFAGSQRFGAVWTGDNTAEWDHLKISIPMCLSLGLVGLSFCGADVGGFFKNPEPELLVRWYQMGAYQPFFRAHAHLDTGRREPWLLPSQHNDIIRDALGQRYSLLPFWYTLLYQAHREGIPVMRPLWVQYPQDVTTFNIDDQYLLGDALLVHPVSDSGAHGVQVYLPGQGEVWYDIQSYQKHHGPQTLYLPVTLSSIPVFQRGGTIVPRWMRVRRSSECMKDDPITLFVALSPQGTAQGELFLDDGHTFNYQTRQEFLLRRFSFSGNTLVSSSADPEGHFETPIWIERVVIIGAGKPAAVVLQTKGSPESRLSFQHDPETSVLVLRKPGINVASDWSIHLR.

An N-terminal signal peptide occupies residues 1–28; the sequence is MAAVAAVAARRRRSWASLVLAFLGVCLG. A disulfide bridge connects residues Cys-41 and Cys-47. The residue at position 52 (Ser-52) is a Phosphoserine. A glycan (N-linked (GlcNAc...) asparagine) is linked at Asn-97. The segment at 181-238 is disordered; that stretch reads QRAPRVSQGSKDPAEGDGAQPEETPRDGDKPEETQGKAEKDEPGAWEETFKTHSDSKP. Positions 203 to 236 are enriched in basic and acidic residues; it reads ETPRDGDKPEETQGKAEKDEPGAWEETFKTHSDS. Substrate-binding residues include Asp-283 and Asp-429. Catalysis depends on Asp-542, which acts as the Nucleophile. Arg-602 is a substrate binding site. Catalysis depends on Asp-618, which acts as the Proton donor. An intrachain disulfide couples Cys-633 to Cys-644. Position 676 (His-676) interacts with substrate.

Belongs to the glycosyl hydrolase 31 family. Heterodimer of a catalytic alpha subunit (GANAB) and a beta subunit (PRKCSH). Binds glycosylated PTPRC. In terms of tissue distribution, detected in placenta. Isoform 1 and isoform 2 are expressed in the kidney and liver.

The protein resides in the endoplasmic reticulum. Its subcellular location is the golgi apparatus. It localises to the melanosome. It carries out the reaction N(4)-(alpha-D-Glc-(1-&gt;3)-alpha-D-Man-(1-&gt;2)-alpha-D-Man-(1-&gt;2)-alpha-D-Man-(1-&gt;3)-[alpha-D-Man-(1-&gt;2)-alpha-D-Man-(1-&gt;3)-[alpha-D-Man-(1-&gt;2)-alpha-D-Man-(1-&gt;6)]-alpha-D-Man-(1-&gt;6)]-beta-D-Man-(1-&gt;4)-beta-D-GlcNAc-(1-&gt;4)-beta-D-GlcNAc)-L-asparaginyl-[protein] + H2O = N(4)-(alpha-D-Man-(1-&gt;2)-alpha-D-Man-(1-&gt;2)-alpha-D-Man-(1-&gt;3)-[alpha-D-Man-(1-&gt;2)-alpha-D-Man-(1-&gt;3)-[alpha-D-Man-(1-&gt;2)-alpha-D-Man-(1-&gt;6)]-alpha-D-Man-(1-&gt;6)]-beta-D-Man-(1-&gt;4)-beta-D-GlcNAc-(1-&gt;4)-beta-D-GlcNAc)-L-asparaginyl-[protein] (N-glucan mannose isomer 9A1,2,3B1,2,3) + beta-D-glucose. The enzyme catalyses N(4)-(alpha-D-Glc-(1-&gt;3)-alpha-D-Glc-(1-&gt;3)-alpha-D-Man-(1-&gt;2)-alpha-D-Man-(1-&gt;2)-alpha-D-Man-(1-&gt;3)-[alpha-D-Man-(1-&gt;2)-alpha-D-Man-(1-&gt;3)-[alpha-D-Man-(1-&gt;2)-alpha-D-Man-(1-&gt;6)]-alpha-D-Man-(1-&gt;6)]-beta-D-Man-(1-&gt;4)-beta-D-GlcNAc-(1-&gt;4)-beta-D-GlcNAc)-L-asparaginyl-[protein] + H2O = N(4)-(alpha-D-Glc-(1-&gt;3)-alpha-D-Man-(1-&gt;2)-alpha-D-Man-(1-&gt;2)-alpha-D-Man-(1-&gt;3)-[alpha-D-Man-(1-&gt;2)-alpha-D-Man-(1-&gt;3)-[alpha-D-Man-(1-&gt;2)-alpha-D-Man-(1-&gt;6)]-alpha-D-Man-(1-&gt;6)]-beta-D-Man-(1-&gt;4)-beta-D-GlcNAc-(1-&gt;4)-beta-D-GlcNAc)-L-asparaginyl-[protein] + beta-D-glucose. It functions in the pathway glycan metabolism; N-glycan metabolism. With respect to regulation, inhibited by deoxynojirimycin. Its function is as follows. Catalytic subunit of glucosidase II that cleaves sequentially the 2 innermost alpha-1,3-linked glucose residues from the Glc(2)Man(9)GlcNAc(2) oligosaccharide precursor of immature glycoproteins. Required for PKD1/Polycystin-1 and PKD2/Polycystin-2 maturation and localization to the cell surface and cilia. The polypeptide is Neutral alpha-glucosidase AB (Homo sapiens (Human)).